A 544-amino-acid polypeptide reads, in one-letter code: uncharacterized protein (544 aa).

Positions 1-22 (MYFSQNAIILVMLMFVISAVFY) are cleaved as a signal peptide.

This is an uncharacterized protein from Methanocaldococcus jannaschii (strain ATCC 43067 / DSM 2661 / JAL-1 / JCM 10045 / NBRC 100440) (Methanococcus jannaschii).